The following is a 470-amino-acid chain: Probable V-type proton ATPase subunit H 2 (470 aa).

Belongs to the V-ATPase H subunit family. In terms of assembly, V-ATPase is a heteromultimeric enzyme made up of two complexes: the ATP-hydrolytic V1 complex and the proton translocation V0 complex. The V1 complex consists of three catalytic AB heterodimers that form a heterohexamer, three peripheral stalks each consisting of EG heterodimers, one central rotor including subunits D and F, and the regulatory subunits C and H. The proton translocation complex V0 consists of the proton transport subunit a, a ring of proteolipid subunits c9c'', rotary subunit d, subunits e and f, and the accessory subunits vah-19/Ac45 and vah-20/PRR.

Subunit of the V1 complex of vacuolar(H+)-ATPase (V-ATPase), a multisubunit enzyme composed of a peripheral complex (V1) that hydrolyzes ATP and a membrane integral complex (V0) that translocates protons. V-ATPase is responsible for acidifying and maintaining the pH of intracellular compartments and in some cell types, is targeted to the plasma membrane, where it is responsible for acidifying the extracellular environment. Subunit H is essential for V-ATPase activity, but not for the assembly of the complex. The protein is Probable V-type proton ATPase subunit H 2 of Caenorhabditis elegans.